The primary structure comprises 36 residues: YKRGGGGWGGGGGWKGGGGGGGGWKGGGGGGKGGGG.

Positions 1 to 36 (YKRGGGGWGGGGGWKGGGGGGGGWKGGGGGGKGGGG) are disordered.

In terms of biological role, possesses antifungal activity against a number of phytopathogenic fungi, including H.sativum and F.culmorum. This is Glycine-rich protein GWK from Cucumis melo (Muskmelon).